Consider the following 595-residue polypeptide: MEFLCLAPTRSFSTNPKLTKSIPSDHTSTTSRIFTYQNMRGSTMRPLALPLKMSPIVSVPDITAPVENVPAILPKVVPGELIVNKPTGGDSDELFQYLVDILASPVYDVAIESPLELAEKLSDRLGVNFYIKREDKQRVFSFKLRGAYNMMSNLSREELDKGVITASAGNHAQGVALAGQRLNCVAKIVMPTTTPQIKIDAVRALGGDVVLYGKTFDEAQTHALELSEKDGLKYIPPFDDPGVIKGQGTIGTEINRQLKDIHAVFIPVGGGGLIAGVATFFKQIAPNTKIIGVEPYGAASMTLSLHEGHRVKLSNVDTFADGVAVALVGEYTFAKCQELIDGMVLVANDGISAAIKDVYDEGRNILETSGAVAIAGAAAYCEFYKIKNENIVAIASGANMDFSKLHKVTELAGLGSGKEALLATFMVEQQGSFKTFVGLVGSLNFTELTYRFTSERKNALILYRVNVDKESDLEKMIEDMKSSNMTTLNLSHNELVVDHLKHLVGGSANISDEIFGEFIVPEKAETLKTFLDAFSPRWNITLCRYRNQGDINASLLMGFQVPQAEMDEFKNQADKLGYPYELDNYNEAFNLVVSE.

Residues 1–51 constitute a chloroplast transit peptide; that stretch reads MEFLCLAPTRSFSTNPKLTKSIPSDHTSTTSRIFTYQNMRGSTMRPLALPL. Lys143 is modified (N6-(pyridoxal phosphate)lysine). 2 ACT-like domains span residues 420–492 and 514–585; these read ALLA…NLSH and IFGE…LDNY.

The protein belongs to the serine/threonine dehydratase family. Homotetramer. The cofactor is pyridoxal 5'-phosphate. Proteolytically cleaved by a chymotrypsin-like digestive protease in the midgut of the lepidopteran insects to remove the C-terminal regulatory domain, which allows efficient metabolizing of threonine in the presence of high isoleucine levels in the gut. In terms of tissue distribution, expressed in floral buds, 8-9 mm long flowers 1 to 2 days before anthesis, open flowers and floral organs including sepals, petals, stamens and carpels of 8-9 mm flowers (at protein level). Expressed in very early floral meristems of the anantha. Over 500-fold expression in mature flowers compared to leaves. Expressed in sepals, petals, stamens and carpels of the mature flower. In sepals, mostly expressed in the abaxial mesophyll cells and in petals in parenchymal cells. Not expressed in epidermal or vascular tissues of sepals and petals. In stamens, expressed in parenchymal cells of the connective and lobes, but not expressed in differentiated tissues such as tapetum (TP), stomium (SM), or pollen grains (PG). Not expressed in roots or seeds. High level of expression in immature flower buds, unopened flowers and opened flowers. Not expressed in unstressed leaves, root, stem or petiole.

It localises to the plastid. The protein localises to the chloroplast. The catalysed reaction is L-threonine = 2-oxobutanoate + NH4(+). It catalyses the reaction L-serine = pyruvate + NH4(+). The protein operates within amino-acid biosynthesis; L-isoleucine biosynthesis; 2-oxobutanoate from L-threonine: step 1/1. Its activity is regulated as follows. Threonine dehydratase 2 biosynthetic, chloroplastic: Strongly inhibited by 1 mM isoleucine. Processed threonine dehydratase 2: Not inhibited by isoleucine. Not required for normal growth and development of the plant. Its function is as follows. Involved in defense against lepidopteran, but not coleopteran herbivore insects. Acts in the insect gut to degrade threonine, which is an essential and limiting nutrient for the growth of lepidopteran larvae. Active against both L-threonine and L-serine. This chain is Threonine dehydratase 2 biosynthetic, chloroplastic, found in Solanum lycopersicum (Tomato).